Consider the following 236-residue polypeptide: MHTTQKDTTYTKIFVGGLPYHTTDASLRKYFEVFGDIEEAVVITDRQTGKSRGYGFVTMADRAAAERACKDPNPIIDGRKANVNLAYLGAKPRIMQPGFAFGVQQLHPALIQRPFGIPAHYVYPQAFVQPGVVIPHVQPTAAAASTTPYIDYTGAAYAQYSAAAAAAAAAAAYDQYPYAASPAAAGYVTTGGYSYAVQQPITAAAPGTAAAAAAAAAAAAAFGQYQPQQLQTDRMQ.

Positions 11–88 constitute an RRM domain; that stretch reads TKIFVGGLPY…RKANVNLAYL (78 aa). The interval 175 to 199 is necessary for interaction with EIF4E; sequence QYPYAASPAAAGYVTTGGYSYAVQQ.

In terms of assembly, interacts with EIF4E; this interaction prevents EIF4E from binding to p53/TP53 mRNA and inhibits the assembly of translation initiation complex. In terms of tissue distribution, expressed strongly in heart and skeletal muscles. Weakly expressed in intestine, aorta, liver, lung, kidney, uterus and bladder.

The protein resides in the nucleus. It localises to the cytoplasm. Its function is as follows. Multifunctional RNA-binding protein involved in the regulation of pre-mRNA splicing, mRNA stability and mRNA translation important for cell fate decision and differentiation. Plays a major role in pre-mRNA alternative splicing regulation. Mediates preferentially muscle-specific exon inclusion in numerous mRNAs important for striated cardiac and skeletal muscle cell differentiation. Binds to intronic splicing enhancer (ISE) composed of stretches of GU-rich motifs localized in flanking intron of exon that will be included by alternative splicing. Involved in embryonic stem cell (ESC) transition to cardiac cell differentiation by promoting pre-mRNA alternative splicing events of several pluripotency and/or differentiation genes. Plays a role in the regulation of mRNA stability. Binds to 3'-untranslated region (UTR) AU-rich elements in target transcripts, such as CDKN1A and MYOG, leading to maintain their stabilities. Involved in myogenic differentiation by regulating MYOG levels. Binds to multiple regions in the mRNA 3'-UTR of TP63, hence inducing its destabilization. Also promotes the destabilization of the CHRM2 mRNA via its binding to a region in the coding sequence. Plays a role in the regulation of mRNA translation. Mediates repression of p53/TP53 mRNA translation through its binding to U-rich element in the 3'-UTR, hence preventing EIF4E from binding to p53/TP53 mRNA and translation initiation. Binds to a huge amount of mRNAs. Required for embryonic heart development, sarcomer and M-band formation in striated muscles. Together with RBM20, promotes the expression of short isoforms of PDLIM5/ENH in cardiomyocytes. This chain is RNA-binding protein 24, found in Mus musculus (Mouse).